A 673-amino-acid chain; its full sequence is Polyunsaturated fatty acid 5-lipoxygenase (673 aa).

The region spanning Pro-2–Lys-117 is the PLAT domain. Ca(2+) is bound by residues Gly-17, Thr-18, Asp-19, Asn-44, Asp-45, Glu-47, Asp-79, and Asp-80. A Lipoxygenase domain is found at Leu-118–Ile-673. At Ser-271 the chain carries Phosphoserine. Residues His-367 and His-372 each contribute to the Fe cation site. Phosphoserine is present on Ser-523. The Fe cation site is built by His-550, Asn-554, and Ile-673.

Belongs to the lipoxygenase family. Homodimer. Interacts with ALOX5AP and LTC4S. Interacts with COTL1, the interaction is required for stability and efficient catalytic activity. Interacts with PIK3R1; this interaction bridges ALOX5 with CD40 after CD40 ligation in B cells and leads to the production of reactive oxygen species (ROS). Interacts (via PLAT domain) with DICER1 (via Dicer dsRNA-binding fold domain); this interaction enhances arachidonate 5-lipoxygenase activity and modifies the miRNA precursor processing activity of DICER1. Fe cation serves as cofactor. Serine phosphorylation by MAPKAPK2 is stimulated by arachidonic acid. Phosphorylation on Ser-523 by PKA has an inhibitory effect. Phosphorylation on Ser-271 prevents export from the nucleus. Phosphorylation at Ser-523 is stimulated by 8-bromo-3',5'-cyclic AMP or prostaglandin E2.

It localises to the cytoplasm. The protein resides in the nucleus matrix. The protein localises to the nucleus membrane. Its subcellular location is the perinuclear region. It is found in the cytosol. It localises to the nucleus envelope. The protein resides in the nucleus intermembrane space. The enzyme catalyses (5Z,8Z,11Z,14Z)-eicosatetraenoate + O2 = leukotriene A4 + H2O. It carries out the reaction 18-HEPE + O2 = (5S)-hydroperoxy-18-hydroxy-(7E,9E,11Z,14Z,16E)-eicosapentaenoate. It catalyses the reaction (18R)-hydroxy-(5Z,8Z,11Z,14Z,16E)-eicosapentaenoate + O2 = (5S)-hydroperoxy-(18R)-hydroxy-(6E,8Z,11Z,14Z,16E)-eicosapentaenoate. The catalysed reaction is (18S)-hydroxy-(5Z,8Z,11Z,14Z,16E)-eicosapentaenoate + O2 = (5S)-hydroperoxy-(18S)-hydroxy-(6E,8Z,11Z,14Z,16E)-eicosapentaenoate. The enzyme catalyses (5S)-hydroperoxy-(18S)-hydroxy-(6E,8Z,11Z,14Z,16E)-eicosapentaenoate = (5S,6S)-epoxy-(18S)-hydroxy-(7E,9E,11Z,14Z,16E)-eicosapentaenoate + H2O. It carries out the reaction (5S)-hydroperoxy-(18R)-hydroxy-(6E,8Z,11Z,14Z,16E)-eicosapentaenoate = (5S,6S)-epoxy-(18R)-hydroxy-(7E,9E,11Z,14Z,16E)-eicosapentaenoate + H2O. It catalyses the reaction (5S)-hydroperoxy-18-hydroxy-(7E,9E,11Z,14Z,16E)-eicosapentaenoate = (5S,6S)-epoxy-18-hydroxy-(7E,9E,11Z,14Z,16E)-eicosapentaenoate + H2O. The catalysed reaction is (5Z,8Z,11Z,14Z)-eicosatetraenoate + O2 = (5S)-hydroperoxy-(6E,8Z,11Z,14Z)-eicosatetraenoate. The enzyme catalyses (15S)-hydroxy-(5Z,8Z,11Z,13E)-eicosatetraenoate + O2 = (5S)-hydroperoxy-(15S)-hydroxy-(6E,8Z,11Z,13E)-eicosatetraenoate. It carries out the reaction (5S)-hydroperoxy-(6E,8Z,11Z,14Z)-eicosatetraenoate = leukotriene A4 + H2O. It catalyses the reaction (5Z,8Z,11Z,14Z)-eicosatetraenoate + O2 = (8S)-hydroperoxy-(5Z,9E,11Z,14Z)-eicosatetraenoate. The catalysed reaction is (5Z,8Z,11Z,14Z)-eicosatetraenoate + O2 = (12S)-hydroperoxy-(5Z,8Z,10E,14Z)-eicosatetraenoate. The enzyme catalyses (5Z,8Z)-eicosadienoate + O2 = (5S)-hydroperoxy-(6E,8Z)-eicosadienoate. It carries out the reaction (12S)-hydroxy-(5Z,8Z,10E,14Z)-eicosatetraenoate + O2 = (5S)-hydroperoxy-(12S)-hydroxy-(6E,8Z,10E,14Z)-eicosatetraenoate. It catalyses the reaction (5Z,8Z,11Z,14Z,17Z)-eicosapentaenoate + O2 = 5-hydroperoxy-(6E,8Z,11Z,14Z,17Z)-eicosapentaenoate. The catalysed reaction is (4Z,7Z,10Z,13Z,16Z,19Z)-docosahexaenoate + O2 = (14S)-hydroperoxy-(4Z,7Z,10Z,12E,16Z,19Z)-docosahexaenoate. The enzyme catalyses (4Z,7Z,10Z,13Z,16Z,19Z)-docosahexaenoate + O2 = (7S)-hydroperoxy-(4Z,8E,10Z,13Z,16Z,19Z)-docosahexaenoate. It carries out the reaction (4Z,7Z,10Z,13Z,16Z,19Z)-docosahexaenoate + O2 = (17S)-hydroperoxy-(4Z,7Z,10Z,13Z,15E,19Z)-docosahexaenoate. The protein operates within lipid metabolism; leukotriene A4 biosynthesis. In terms of biological role, catalyzes the oxygenation of arachidonate to 5-hydroperoxyeicosatetraenoate (5-HPETE) followed by the dehydration to 5,6- epoxyeicosatetraenoate (Leukotriene A4/LTA4), the first two steps in the biosynthesis of leukotrienes, which are potent mediators of inflammation. Also catalyzes the oxygenation of arachidonate into 8-hydroperoxyicosatetraenoate (8-HPETE) and 12-hydroperoxyicosatetraenoate (12-HPETE). Displays lipoxin synthase activity being able to convert (15S)-HETE into a conjugate tetraene. Although arachidonate is the preferred substrate, this enzyme can also metabolize oxidized fatty acids derived from arachidonate such as (15S)-HETE, eicosapentaenoate (EPA) such as (18R)- and (18S)-HEPE or docosahexaenoate (DHA) which lead to the formation of specialized pro-resolving mediators (SPM) lipoxin and resolvins E and D respectively, therefore it participates in anti-inflammatory responses. Oxidation of DHA directly inhibits endothelial cell proliferation and sprouting angiogenesis via peroxisome proliferator-activated receptor gamma (PPARgamma). It does not catalyze the oxygenation of linoleic acid and does not convert (5S)-HETE to lipoxin isomers. In addition to inflammatory processes, it participates in dendritic cell migration, wound healing through an antioxidant mechanism based on heme oxygenase-1 (HO-1) regulation expression, monocyte adhesion to the endothelium via ITGAM expression on monocytes. Moreover, it helps establish an adaptive humoral immunity by regulating primary resting B cells and follicular helper T cells and participates in the CD40-induced production of reactive oxygen species (ROS) after CD40 ligation in B cells through interaction with PIK3R1 that bridges ALOX5 with CD40. May also play a role in glucose homeostasis, regulation of insulin secretion and palmitic acid-induced insulin resistance via AMPK. Can regulate bone mineralization and fat cell differentiation increases in induced pluripotent stem cells. This is Polyunsaturated fatty acid 5-lipoxygenase from Mesocricetus auratus (Golden hamster).